The primary structure comprises 482 residues: Zinc finger protein 385B (482 aa).

Residues 1 to 105 (MNMATFLRGF…TGSACHTTTL (105 aa)) are required for induction of apoptosis. 2 consecutive Matrin-type zinc fingers follow at residues 34–64 (SFCE…RVKQ) and 169–199 (ISCN…KVKA). Disordered stretches follow at residues 54–75 (DGKS…PPVQ), 189–259 (KGSK…SFLL), and 268–287 (LGAI…SVAE). The segment at 106–482 (PALVRTPTLM…TPASILFAPY (377 aa)) is interaction with p53/TP53. Positions 231 to 240 (SSDKSEDKGK) are enriched in basic and acidic residues. The segment at 294–328 (KKLLYCSLCKVAVNSLSQLEAHNTGSKHKTMVEAR) adopts a Matrin-type 3 zinc-finger fold. Disordered stretches follow at residues 331–352 (AGPI…GSKG) and 378–397 (HISS…KPKY). A Matrin-type 4 zinc finger spans residues 360–390 (FHCEICDVHVNSEIQLKQHISSRRHKDRVAG).

As to quaternary structure, interacts with p53/TP53; the interaction is direct.

Its subcellular location is the nucleus. Functionally, may play a role in p53/TP53-mediated apoptosis. The protein is Zinc finger protein 385B (Znf385b) of Mus musculus (Mouse).